Consider the following 429-residue polypeptide: Glycogenin-1 (429 aa).

5 residues coordinate UDP: leucine 8, threonine 10, asparagine 11, tyrosine 14, and arginine 76. Leucine 8, threonine 10, asparagine 11, tyrosine 14, arginine 76, lysine 85, aspartate 101, alanine 102, aspartate 103, asparagine 132, serine 133, aspartate 159, aspartate 162, and glutamine 163 together coordinate UDP-alpha-D-glucose. UDP contacts are provided by aspartate 101, alanine 102, and aspartate 103. Aspartate 101 serves as a coordination point for Mn(2+). Position 103 (aspartate 103) interacts with Mn(2+). Tyrosine 194 carries O-linked (Glc...) tyrosine glycosylation. Histidine 211, glycine 214, and lysine 217 together coordinate UDP. Histidine 211 serves as a coordination point for Mn(2+). Residues glycine 214 and lysine 217 each coordinate UDP-alpha-D-glucose. Disordered regions lie at residues 254 to 274 and 300 to 338; these read VFPS…HPKI and SYDT…QTPH. Basic and acidic residues-rich tracts occupy residues 263–274 and 309–338; these read EHRSHSADHPKI and DSHR…QTPH.

Belongs to the glycosyltransferase 8 family. Glycogenin subfamily. In terms of assembly, forms a heterooctamer with one molecule of gyg-1 bound to each protomer of the gys-1 homotetramer. The N-terminus of gys-1 is involved in interprotomer contacts with gyg-1. The interaction with gys-1 is required for glycogen production but is not required for gys-1 intrinsic activity. Requires Mn(2+) as cofactor. In terms of processing, self-glycosylated by the transfer of glucose residues from UDP-glucose to itself, forming an alpha-1,4-glycan of around 10 residues attached to Tyr-194.

It is found in the cytoplasm. The protein resides in the nucleus. The catalysed reaction is L-tyrosyl-[glycogenin] + UDP-alpha-D-glucose = alpha-D-glucosyl-L-tyrosyl-[glycogenin] + UDP + H(+). It catalyses the reaction [1,4-alpha-D-glucosyl](n)-L-tyrosyl-[glycogenin] + UDP-alpha-D-glucose = [1,4-alpha-D-glucosyl](n+1)-L-tyrosyl-[glycogenin] + UDP + H(+). Its pathway is glycan biosynthesis; glycogen biosynthesis. Its function is as follows. Self-glucosylating initiator of glycogen synthesis. It catalyzes the formation of a short alpha (1,4)-glucosyl chain covalently attached via a glucose 1-O-tyrosyl linkage to internal tyrosine residues and these chains act as primers for the elongation reaction catalyzed by glycogen synthase. In Caenorhabditis elegans, this protein is Glycogenin-1.